Here is a 410-residue protein sequence, read N- to C-terminus: Multifunctional CCA protein (410 aa).

Residues glycine 8 and arginine 11 each coordinate ATP. CTP contacts are provided by glycine 8 and arginine 11. Glutamate 21 and aspartate 23 together coordinate Mg(2+). ATP-binding residues include arginine 91, arginine 137, and arginine 140. The CTP site is built by arginine 91, arginine 137, and arginine 140. One can recognise an HD domain in the interval 228–329; that stretch reads TGVHVLSVLR…LELLQRFDVF (102 aa).

The protein belongs to the tRNA nucleotidyltransferase/poly(A) polymerase family. Bacterial CCA-adding enzyme type 1 subfamily. In terms of assembly, monomer. Can also form homodimers and oligomers. Mg(2+) is required as a cofactor. It depends on Ni(2+) as a cofactor.

It carries out the reaction a tRNA precursor + 2 CTP + ATP = a tRNA with a 3' CCA end + 3 diphosphate. The catalysed reaction is a tRNA with a 3' CCA end + 2 CTP + ATP = a tRNA with a 3' CCACCA end + 3 diphosphate. Catalyzes the addition and repair of the essential 3'-terminal CCA sequence in tRNAs without using a nucleic acid template. Adds these three nucleotides in the order of C, C, and A to the tRNA nucleotide-73, using CTP and ATP as substrates and producing inorganic pyrophosphate. tRNA 3'-terminal CCA addition is required both for tRNA processing and repair. Also involved in tRNA surveillance by mediating tandem CCA addition to generate a CCACCA at the 3' terminus of unstable tRNAs. While stable tRNAs receive only 3'-terminal CCA, unstable tRNAs are marked with CCACCA and rapidly degraded. This is Multifunctional CCA protein from Ectopseudomonas mendocina (strain ymp) (Pseudomonas mendocina).